The following is a 209-amino-acid chain: MNKVNINFSLKSLPTDLLNHMNYYDNGSTNVKCTLQSFKNTLEHNLLLINKLIEESENITNVLCHPNNILLEFNSNNVMNKLINDGTVKIINDNYDGTDDDLIPLVDLSEEETNQDRLNRIINMTNRDNSGGLFGASDDDEEEISDDDLLLHDLLGNQNDTSSIFNKYTNLIGNVIDNSDNSSDSDDSDSLDGSDDLNDSDNVDNLFVG.

Residues 177–209 (DNSDNSSDSDDSDSLDGSDDLNDSDNVDNLFVG) are disordered. The segment covering 183-202 (SDSDDSDSLDGSDDLNDSDN) has biased composition (acidic residues).

This is an uncharacterized protein from Acanthamoeba polyphaga (Amoeba).